Here is a 230-residue protein sequence, read N- to C-terminus: Small ribosomal subunit protein uS3 (230 aa).

Residues 39–107 (VRKFLEKKLE…PAQINIAEIR (69 aa)) form the KH type-2 domain.

The protein belongs to the universal ribosomal protein uS3 family. In terms of assembly, part of the 30S ribosomal subunit. Forms a tight complex with proteins S10 and S14.

Functionally, binds the lower part of the 30S subunit head. Binds mRNA in the 70S ribosome, positioning it for translation. The polypeptide is Small ribosomal subunit protein uS3 (Shewanella amazonensis (strain ATCC BAA-1098 / SB2B)).